A 338-amino-acid polypeptide reads, in one-letter code: Pyridoxal 5'-phosphate synthase subunit PdxS (338 aa).

D66 contributes to the D-ribose 5-phosphate binding site. K123 (schiff-base intermediate with D-ribose 5-phosphate) is an active-site residue. G195 contributes to the D-ribose 5-phosphate binding site. K207 contacts D-glyceraldehyde 3-phosphate. D-ribose 5-phosphate-binding positions include G256 and 277–278 (GS).

The protein belongs to the PdxS/SNZ family. In terms of assembly, in the presence of PdxT, forms a dodecamer of heterodimers.

It carries out the reaction aldehydo-D-ribose 5-phosphate + D-glyceraldehyde 3-phosphate + L-glutamine = pyridoxal 5'-phosphate + L-glutamate + phosphate + 3 H2O + H(+). The protein operates within cofactor biosynthesis; pyridoxal 5'-phosphate biosynthesis. In terms of biological role, catalyzes the formation of pyridoxal 5'-phosphate from ribose 5-phosphate (RBP), glyceraldehyde 3-phosphate (G3P) and ammonia. The ammonia is provided by the PdxT subunit. Can also use ribulose 5-phosphate and dihydroxyacetone phosphate as substrates, resulting from enzyme-catalyzed isomerization of RBP and G3P, respectively. The polypeptide is Pyridoxal 5'-phosphate synthase subunit PdxS (Saccharolobus islandicus (strain L.S.2.15 / Lassen #1) (Sulfolobus islandicus)).